We begin with the raw amino-acid sequence, 283 residues long: Orotidine 5'-phosphate decarboxylase (283 aa).

Lysine 97 functions as the Proton donor in the catalytic mechanism.

The protein belongs to the OMP decarboxylase family. Type 2 subfamily.

The catalysed reaction is orotidine 5'-phosphate + H(+) = UMP + CO2. It participates in pyrimidine metabolism; UMP biosynthesis via de novo pathway; UMP from orotate: step 2/2. This is Orotidine 5'-phosphate decarboxylase from Clostridium botulinum (strain ATCC 19397 / Type A).